A 208-amino-acid chain; its full sequence is N-(5'-phosphoribosyl)anthranilate isomerase (208 aa).

Belongs to the TrpF family.

It carries out the reaction N-(5-phospho-beta-D-ribosyl)anthranilate = 1-(2-carboxyphenylamino)-1-deoxy-D-ribulose 5-phosphate. It participates in amino-acid biosynthesis; L-tryptophan biosynthesis; L-tryptophan from chorismate: step 3/5. The sequence is that of N-(5'-phosphoribosyl)anthranilate isomerase from Desulforamulus reducens (strain ATCC BAA-1160 / DSM 100696 / MI-1) (Desulfotomaculum reducens).